The primary structure comprises 393 residues: 4-hydroxyphenylpyruvate dioxygenase (393 aa).

Position 2 is an N-acetylthreonine (Thr2). VOC domains lie at 18-149 (HFHS…LVEK) and 180-338 (MIDH…IFTK). Position 132 is an N6-succinyllysine (Lys132). A Fe cation-binding site is contributed by His183. Phosphoserine occurs at positions 211, 226, and 250. Positions 266 and 349 each coordinate Fe cation.

Belongs to the 4HPPD family. Homodimer. The cofactor is Fe cation.

The protein resides in the cytoplasm. The protein localises to the endoplasmic reticulum membrane. It localises to the golgi apparatus membrane. It carries out the reaction 3-(4-hydroxyphenyl)pyruvate + O2 = homogentisate + CO2. It functions in the pathway amino-acid degradation; L-phenylalanine degradation; acetoacetate and fumarate from L-phenylalanine: step 3/6. Its function is as follows. Catalyzes the conversion of 4-hydroxyphenylpyruvic acid to homogentisic acid, one of the steps in tyrosine catabolism. This Homo sapiens (Human) protein is 4-hydroxyphenylpyruvate dioxygenase (HPD).